Here is an 853-residue protein sequence, read N- to C-terminus: Transforming growth factor beta receptor type 3 (853 aa).

The N-terminal stretch at 1 to 23 (MAVTSHHMIPVMVVLMSACLATA) is a signal peptide. Residues 24 to 789 (GPEPSTRCEL…IFHGLDTLTV (766 aa)) are Extracellular-facing. Asn-37, Asn-144, and Asn-493 each carry an N-linked (GlcNAc...) asparagine glycan. Cys-55 and Cys-200 are disulfide-bonded. The ZP domain maps to 456–730 (KCDHEKMVVA…PRCVTPDDAC (275 aa)). Positions 530–559 (SPGDSSGWPDGYEDLESGDNGFPGDGDEGE) are disordered. O-linked (Xyl...) (glycosaminoglycan) serine glycosylation is found at Ser-535 and Ser-546. 3 N-linked (GlcNAc...) asparagine glycosylation sites follow: Asn-572, Asn-591, and Asn-698. Intrachain disulfides connect Cys-640-Cys-706, Cys-661-Cys-730, and Cys-711-Cys-723. Positions 737 to 751 (MIWTMMQNKKTFTKP) are interaction with TGF-beta ligand. A helical transmembrane segment spans residues 790-811 (MGIAFAAFVIGALLTGALWYIY). The Cytoplasmic segment spans residues 812-853 (SHTGETARRQQVPTSPPASENSSAAHSIGSTQSTPCSSSSTA). Polar residues predominate over residues 820 to 836 (RQQVPTSPPASENSSAA). Positions 820-853 (RQQVPTSPPASENSSAAHSIGSTQSTPCSSSSTA) are disordered. The segment covering 838–853 (SIGSTQSTPCSSSSTA) has biased composition (low complexity). Thr-842 carries the phosphothreonine modification.

As to quaternary structure, forms homodimers and homooligomers. Interacts with DYNLT4. Interacts with integrin ITGA5:ITGB1; this interaction promotes the internalization and trafficking of ITGA5:ITGB1 into endocytic vesicles. Interacts with TGFB1, BMP2, BMP5, BMP7 or GDF5 and inhibin A via the ligand binding domains. Interacts with ALK3/BMPR1A; this interaction results in the cell surface retention of BMPR1A. Interacts with ALK6/BMPR1B; this interaction enhances BMPR1B-mediated stimulation of the BMP signaling pathway. Interacts with the scaffolding protein beta-arrestin2/ARRB2; this interaction mediates internalization of TGFBR3 and thus regulates migration, actin cytoskeleton and activation of CDC42. In terms of processing, extensively modified by glycosaminoglycan groups (GAG). Phosphorylated in the cytoplasmic domain by the type II receptor TGFBR2 at THR-842 to mediate recruitment of ARRB2 and subsequent internalization of TGFBR2 and TGFBR3.

The protein resides in the cell membrane. The protein localises to the secreted. It localises to the extracellular space. Its subcellular location is the extracellular matrix. Its function is as follows. Cell surface receptor that regulates diverse cellular processes including cell proliferation, differentiation, migration, and apoptosis. Initiates BMP, inhibin, and TGF-beta signaling pathways by interacting with different ligands including TGFB1, BMP2, BMP5, BMP7 or GDF5. Alternatively, acts as a cell surface coreceptor for BMP ligands, serving to enhance ligand binding by differentially regulating BMPR1A/ALK3 and BMPR1B/ALK6 receptor trafficking. Promotes epithelial cell adhesion, focal adhesion formation and integrin signaling during epithelial cell spreading on fibronectin. By interacting with the scaffolding protein beta-arrestin2/ARRB2, regulates migration or actin cytoskeleton and promotes the activation of CDC42 as well as the inhibition of NF-kappa-B. In gonadotrope cells, acts as an inhibin A coreceptor and regulates follicle-stimulating hormone (FSH) levels and female fertility. Plays a role in the inhibition of directed and random cell migration in epithelial cells by altering the actin cytoskeletal organization. Participates in epithelial-mesenchymal transformation (EMT) upon binding to BMP2 or TGFB2, by activating the PAR6/SMURF1/RHOA pathway. The sequence is that of Transforming growth factor beta receptor type 3 (Tgfbr3) from Rattus norvegicus (Rat).